Here is a 104-residue protein sequence, read N- to C-terminus: Ig lambda-2 chain C region (104 aa).

The 94-residue stretch at 6–99 folds into the Ig-like domain; the sequence is PTLTVFPPST…EGNTVEKSLS (94 aa). Cys-27 and Cys-85 are disulfide-bonded.

In Rattus norvegicus (Rat), this protein is Ig lambda-2 chain C region.